A 256-amino-acid chain; its full sequence is Thiazole synthase (256 aa).

The active-site Schiff-base intermediate with DXP is K95. Residues G156, 182-183, and 204-205 contribute to the 1-deoxy-D-xylulose 5-phosphate site; these read AG and NT.

Belongs to the ThiG family. As to quaternary structure, homotetramer. Forms heterodimers with either ThiH or ThiS.

It localises to the cytoplasm. The catalysed reaction is [ThiS sulfur-carrier protein]-C-terminal-Gly-aminoethanethioate + 2-iminoacetate + 1-deoxy-D-xylulose 5-phosphate = [ThiS sulfur-carrier protein]-C-terminal Gly-Gly + 2-[(2R,5Z)-2-carboxy-4-methylthiazol-5(2H)-ylidene]ethyl phosphate + 2 H2O + H(+). Its pathway is cofactor biosynthesis; thiamine diphosphate biosynthesis. Functionally, catalyzes the rearrangement of 1-deoxy-D-xylulose 5-phosphate (DXP) to produce the thiazole phosphate moiety of thiamine. Sulfur is provided by the thiocarboxylate moiety of the carrier protein ThiS. In vitro, sulfur can be provided by H(2)S. The protein is Thiazole synthase of Salmonella choleraesuis (strain SC-B67).